Reading from the N-terminus, the 447-residue chain is METRETKPVIFLFPFPLQGHLNPMFQLANIFFNRGFSITVIHTEFNSPNSSNFPHFTFVSIPDSLSEPESYPDVIEILHDLNSKCVAPFGDCLKKLISEEPTAACVIVDALWYFTHDLTEKFNFPRIVLRTVNLSAFVAFSKFHVLREKGYLSLQETKADSPVPELPYLRMKDLPWFQTEDPRSGDKLQIGVMKSLKSSSGIIFNAIEDLETDQLDEARIEFPVPLFCIGPFHRYVSASSSSLLAHDMTCLSWLDKQATNSVIYASLGSIASIDESEFLEIAWGLRNSNQPFLWVVRPGLIHGKEWIEILPKGFIENLEGRGKIVKWAPQPEVLAHRATGGFLTHCGWNSTLEGICEAIPMICRPSFGDQRVNARYINDVWKIGLHLENKVERLVIENAVRTLMTSSEGEEIRKRIMPMKETVEQCLKLGGSSFRNLENLIAYILSF.

UDP-alpha-D-glucose-binding positions include serine 269, 327–328 (WA), 345–353 (HCGWNSTLE), and 367–370 (FGDQ).

Belongs to the UDP-glycosyltransferase family. As to expression, expressed in roots, leaves, hydathodes, sepals and style.

In terms of biological role, glycosylates the amino acid-related molecules isoleucic acid (2-hydroxy-3-methylpentanoic acid) and valic acid (2-hydroxy-3-methylbutyric acid). Acts as a negative regulator of salicylic acid (SA)-dependent plant defense in the absence of pathogens and promotes the jasmonate (JA) response. Negatively influences the onset of senescence. The chain is UDP-glycosyltransferase 76B1 from Arabidopsis thaliana (Mouse-ear cress).